The sequence spans 791 residues: DUF1769 family protein duc1 (791 aa).

The segment at 158-189 (ADSQESDTESLPEINDSSDVSLSDLPSTNVTP) is disordered. Residues 174-184 (SSDVSLSDLPS) are compositionally biased toward low complexity. The FFAT motif lies at 373–379 (RYFTALE). At tyrosine 374 the chain carries Phosphotyrosine. At threonine 376 the chain carries Phosphothreonine. 3 disordered regions span residues 381-505 (QQDQ…SNRR), 542-606 (NVAG…VDGK), and 630-658 (PKPVRTATSQSKIPKPVKHIPSDSNNLDP). A compositionally biased stretch (basic residues) spans 415-426 (LIKRMSLRSKKS). Residues 444-453 (STASAASTSA) are compositionally biased toward low complexity. Positions 455–473 (KTEKEKKMSAPRRSLDKLI) are enriched in basic and acidic residues. Residues serine 477 and serine 493 each carry the phosphoserine modification. A compositionally biased stretch (basic residues) spans 477-487 (SLHRHHHHHHK). The segment covering 555-564 (EQTSITSGVP) has biased composition (polar residues). At serine 574 the chain carries Phosphoserine. The span at 574–586 (STPEKIVEERSID) shows a compositional bias: basic and acidic residues. The span at 587 to 601 (EVSQSNTPSSKQLPQ) shows a compositional bias: polar residues.

Belongs to the UPF0590 family. Interacts (via FFAT-motif) with scs2 (via MSP domain); the interaction is direct and serves to restrict the localization of duc1 to areas of cell membrane-endoplasmic reticulum contact sites, and away from the cell division site.

The protein localises to the cell membrane. Promotes the proper distribution of phosphatidylinositol 4,5-bisphosphate (PtdIns(4,5)P2/PIP2) synthesis at the cell membrane. May bind phosphatidylinositol 4,5-bisphosphate (PtdIns(4,5)P2/PIP2) and is required for robust anchoring of the contractile ring to the cell membrane. The protein is DUF1769 family protein duc1 of Schizosaccharomyces pombe (strain 972 / ATCC 24843) (Fission yeast).